Reading from the N-terminus, the 228-residue chain is MNNAIRIMDLPENERPREKLTRYGVESLSNIELLALILRTGNKSENVISLCARILERCGGLNGLFNANRGELLNINGVGEAKASQILALLELTKRFRSFKSGENYNITNPKDAAYLVMEEMRWLKQEYLKVILLNTKNYVIKVKDVFIGSLNSSIVHPREIFLEAIKNNSYSIIICHNHPSGDTTPSKEDINVSNRIKECGKLIGIELLDHIIIGNGVYISLKEKDIL.

In terms of domain architecture, MPN spans 106-228 (NITNPKDAAY…YISLKEKDIL (123 aa)). The Zn(2+) site is built by His177, His179, and Asp190. A JAMM motif motif is present at residues 177–190 (HNHPSGDTTPSKED).

This sequence belongs to the UPF0758 family.

The chain is UPF0758 protein CTC_02075 from Clostridium tetani (strain Massachusetts / E88).